We begin with the raw amino-acid sequence, 337 residues long: UDP-3-O-acylglucosamine N-acyltransferase 1 (337 aa).

His-238 (proton acceptor) is an active-site residue.

It belongs to the transferase hexapeptide repeat family. LpxD subfamily. Homotrimer.

It carries out the reaction a UDP-3-O-[(3R)-3-hydroxyacyl]-alpha-D-glucosamine + a (3R)-hydroxyacyl-[ACP] = a UDP-2-N,3-O-bis[(3R)-3-hydroxyacyl]-alpha-D-glucosamine + holo-[ACP] + H(+). It functions in the pathway bacterial outer membrane biogenesis; LPS lipid A biosynthesis. Its function is as follows. Catalyzes the N-acylation of UDP-3-O-acylglucosamine using 3-hydroxyacyl-ACP as the acyl donor. Is involved in the biosynthesis of lipid A, a phosphorylated glycolipid that anchors the lipopolysaccharide to the outer membrane of the cell. The polypeptide is UDP-3-O-acylglucosamine N-acyltransferase 1 (Koribacter versatilis (strain Ellin345)).